We begin with the raw amino-acid sequence, 451 residues long: Gamma-aminobutyric acid receptor subunit alpha-2 (451 aa).

The N-terminal stretch at 1-28 (MKTKLNIYNMQFLLFVFLVWDPARLVLA) is a signal peptide. Topologically, residues 29–249 (NIQEDEAKNN…MTAHFHLKRK (221 aa)) are extracellular. Asparagine 38 carries N-linked (GlcNAc...) asparagine glycosylation. Arginine 94 contacts 4-aminobutanoate. Residue asparagine 138 is glycosylated (N-linked (GlcNAc...) asparagine). Position 157 (threonine 157) interacts with 4-aminobutanoate. Cysteine 166 and cysteine 180 are oxidised to a cystine. Residues 250–270 (IGYFVIQTYLPCIMTVILSQV) traverse the membrane as a helical segment. At 271 to 280 (SFWLNRESVP) the chain is on the cytoplasmic side. A helical transmembrane segment spans residues 281 to 300 (ARTVFGVTTVLTMTTLSISA). Residues 301–311 (RNSLPKVAYAT) lie on the Extracellular side of the membrane. A helical membrane pass occupies residues 312–332 (AMDWFIAVCYAFVFSALIEFA). Topologically, residues 333–420 (TVNYFTKRGW…FNSVSKIDRM (88 aa)) are cytoplasmic. Residues 421 to 441 (SRIVFPVLFGTFNLVYWATYL) form a helical membrane-spanning segment. At 442–451 (NREPVLGVSP) the chain is on the extracellular side.

The protein belongs to the ligand-gated ion channel (TC 1.A.9) family. Gamma-aminobutyric acid receptor (TC 1.A.9.5) subfamily. GABRA2 sub-subfamily. As to quaternary structure, heteropentamer, formed by a combination of alpha (GABRA1-6), beta (GABRB1-3), gamma (GABRG1-3), delta (GABRD), epsilon (GABRE), rho (GABRR1-3), pi (GABRP) and theta (GABRQ) subunits, each subunit exhibiting distinct physiological and pharmacological properties. Interacts with UBQLN1. Interacts with KIF21B. Interacts with LHFPL4. Interacts with SHISA7; interaction leads to the regulation of GABA(A) receptor trafficking, channel deactivation kinetics and pharmacology. Post-translationally, glycosylated.

The protein resides in the postsynaptic cell membrane. It is found in the cell membrane. Its subcellular location is the cytoplasmic vesicle membrane. The protein localises to the cell projection. It localises to the dendrite. It carries out the reaction chloride(in) = chloride(out). Its activity is regulated as follows. Activated by pentobarbital. Inhibited by the antagonist bicuculline. Its function is as follows. Alpha subunit of the heteropentameric ligand-gated chloride channel gated by gamma-aminobutyric acid (GABA), a major inhibitory neurotransmitter in the brain. GABA-gated chloride channels, also named GABA(A) receptors (GABAAR), consist of five subunits arranged around a central pore and contain GABA active binding site(s) located at the alpha and beta subunit interfaces. When activated by GABA, GABAARs selectively allow the flow of chloride anions across the cell membrane down their electrochemical gradient. Chloride influx into the postsynaptic neuron following GABAAR opening decreases the neuron ability to generate a new action potential, thereby reducing nerve transmission. The alpha-2 subunit exhibits synaptogenic activity together with beta-2 and very little to no activity together with beta-3, the gamma-2 subunit being necessary but not sufficient to induce rapid synaptic contacts formation. The protein is Gamma-aminobutyric acid receptor subunit alpha-2 of Homo sapiens (Human).